Consider the following 527-residue polypeptide: Beta-glucosidase 19 (527 aa).

A signal peptide spans 1–21 (MKIPLLGLLLLISLVGSPTRA). Positions 52 and 155 each coordinate a beta-D-glucoside. The N-linked (GlcNAc...) asparagine glycan is linked to N183. 200 to 201 (NE) lines the a beta-D-glucoside pocket. E201 functions as the Proton donor in the catalytic mechanism. Cysteines 220 and 231 form a disulfide. A beta-D-glucoside-binding residues include Y345 and E418. Residue E418 is the Nucleophile of the active site. An N-linked (GlcNAc...) asparagine glycan is attached at N462. Residues W469, 476 to 477 (EW), and F485 contribute to the a beta-D-glucoside site. An N-linked (GlcNAc...) asparagine glycan is attached at N495. Residues 524–527 (HEEL) carry the Prevents secretion from ER motif.

It belongs to the glycosyl hydrolase 1 family.

The protein resides in the endoplasmic reticulum lumen. The enzyme catalyses Hydrolysis of terminal, non-reducing beta-D-glucosyl residues with release of beta-D-glucose.. In Arabidopsis thaliana (Mouse-ear cress), this protein is Beta-glucosidase 19.